A 144-amino-acid chain; its full sequence is MKMWLNWVFLLTLLHGIQCEVKVVESGGGLVQPGGSLRLSCATSGFTFSDFYMEWVRQTPGKRLEWIAASRSKAHDYRTEYSASVKGRFIVSRDTSQSVLYLQMNALRAEDTATYYCTRDADYGNSYFGYFDVWGAGTTVTVSS.

The signal sequence occupies residues 1-19 (MKMWLNWVFLLTLLHGIQC). The Ig-like domain occupies 20-133 (EVKVVESGGG…GNSYFGYFDV (114 aa)).

The polypeptide is Ig heavy chain V region M167 (Mus musculus (Mouse)).